A 213-amino-acid polypeptide reads, in one-letter code: tRNA (guanine-N(7)-)-methyltransferase (213 aa).

4 residues coordinate S-adenosyl-L-methionine: E44, E69, N96, and D118. D118 is a catalytic residue. K122 is a binding site for substrate. The tract at residues 124–129 (RHEKRR) is interaction with RNA. Substrate contacts are provided by residues D154 and 191-194 (TEYE).

Belongs to the class I-like SAM-binding methyltransferase superfamily. TrmB family.

It carries out the reaction guanosine(46) in tRNA + S-adenosyl-L-methionine = N(7)-methylguanosine(46) in tRNA + S-adenosyl-L-homocysteine. Its pathway is tRNA modification; N(7)-methylguanine-tRNA biosynthesis. Its function is as follows. Catalyzes the formation of N(7)-methylguanine at position 46 (m7G46) in tRNA. The sequence is that of tRNA (guanine-N(7)-)-methyltransferase from Oceanobacillus iheyensis (strain DSM 14371 / CIP 107618 / JCM 11309 / KCTC 3954 / HTE831).